We begin with the raw amino-acid sequence, 908 residues long: 26S proteasome non-ATPase regulatory subunit 2 (908 aa).

Position 1 is an N-acetylmethionine (M1). A disordered region spans residues M1 to Q51. T9 and T20 each carry phosphothreonine. Positions P10–S22 are enriched in polar residues. A compositionally biased stretch (basic and acidic residues) spans A24–Q51. Residues S29 and S147 each carry the phosphoserine modification. Residue Y194 is modified to Phosphotyrosine. Phosphoserine occurs at positions 361 and 363. PC repeat units lie at residues S409 to S442, G443 to L479, G480 to V514, V517 to K551, and L560 to S589. K551 carries the N6-acetyllysine modification. The segment covering K623–P643 has biased composition (basic and acidic residues). The disordered stretch occupies residues K623–D645. PC repeat units follow at residues L692–Y723 and A742–N757. The tract at residues D708–N903 is required for interaction with UBLCP1.

This sequence belongs to the proteasome subunit S2 family. Component of the 19S proteasome regulatory particle complex. The 26S proteasome consists of a 20S core particle (CP) and two 19S regulatory subunits (RP). The regulatory particle is made of a lid composed of 9 subunits, a base containing 6 ATPases and few additional components including PSMD2. Interacts with RPGRIP1L. Interacts with CRY1 in a KDM8-dependent manner. Interacts (via C-terminus) with phosphatase UBLCP1 (via ubiquitin-like domain); the interaction recruits UBLCP1 to the 19S regulatory particle where it dephosphorylates 19S subunit PSMC2/RPT1 which impairs PSMC2 ATPase activity and disrupts 26S proteasome assembly.

Component of the 26S proteasome, a multiprotein complex involved in the ATP-dependent degradation of ubiquitinated proteins. This complex plays a key role in the maintenance of protein homeostasis by removing misfolded or damaged proteins, which could impair cellular functions, and by removing proteins whose functions are no longer required. Therefore, the proteasome participates in numerous cellular processes, including cell cycle progression, apoptosis, or DNA damage repair. Its function is as follows. Binds to the intracellular domain of tumor necrosis factor type 1 receptor. The binding domain of TRAP1 and TRAP2 resides outside the death domain of TNFR1. The polypeptide is 26S proteasome non-ATPase regulatory subunit 2 (Psmd2) (Mus musculus (Mouse)).